Consider the following 579-residue polypeptide: Lens epithelium-derived growth factor (579 aa).

Positions M1–N64 constitute a PWWP domain. Disordered regions lie at residues S62–L81, P88–A203, A215–S397, and A492–K579. Over residues H94–E107 the composition is skewed to polar residues. Over residues K153–V173 the composition is skewed to basic and acidic residues. Positions V184 to A193 are enriched in basic residues. Positions R186–Q196 match the Nuclear localization signal motif. A compositionally biased stretch (low complexity) spans A215–V224. Basic and acidic residues predominate over residues E261–R308. The span at D321 to E330 shows a compositional bias: acidic residues. Basic residues predominate over residues K334–I349. Residues R347 to E442 adopt a coiled-coil conformation. Composition is skewed to basic and acidic residues over residues G352–S397 and A492–T522. The interval M387–T464 is integrase-binding domain (IBD). Residues G530 to G543 are compositionally biased toward polar residues. Basic and acidic residues predominate over residues E544–K579.

Belongs to the HDGF family.

It localises to the nucleus. In terms of biological role, transcriptional coactivator involved in neuroepithelial stem cell differentiation and neurogenesis. Involved in particular in lens epithelial cell gene regulation and stress responses. May play an important role in lens epithelial to fiber cell terminal differentiation. May play a protective role during stress-induced apoptosis. In Gallus gallus (Chicken), this protein is Lens epithelium-derived growth factor (PSIP1).